The sequence spans 55 residues: Large ribosomal subunit protein bL33 (55 aa).

It belongs to the bacterial ribosomal protein bL33 family.

The protein is Large ribosomal subunit protein bL33 of Sphingopyxis alaskensis (strain DSM 13593 / LMG 18877 / RB2256) (Sphingomonas alaskensis).